Reading from the N-terminus, the 40-residue chain is Photosystem II reaction center protein L (40 aa).

A helical membrane pass occupies residues 19–39 (SLYWGLLLIFVLAVLFSNYFF).

It belongs to the PsbL family. As to quaternary structure, PSII is composed of 1 copy each of membrane proteins PsbA, PsbB, PsbC, PsbD, PsbE, PsbF, PsbH, PsbI, PsbJ, PsbK, PsbL, PsbM, PsbT, PsbX, PsbY, PsbZ, Psb30/Ycf12, at least 3 peripheral proteins of the oxygen-evolving complex and a large number of cofactors. It forms dimeric complexes.

It localises to the plastid. It is found in the chloroplast thylakoid membrane. One of the components of the core complex of photosystem II (PSII). PSII is a light-driven water:plastoquinone oxidoreductase that uses light energy to abstract electrons from H(2)O, generating O(2) and a proton gradient subsequently used for ATP formation. It consists of a core antenna complex that captures photons, and an electron transfer chain that converts photonic excitation into a charge separation. This subunit is found at the monomer-monomer interface and is required for correct PSII assembly and/or dimerization. This chain is Photosystem II reaction center protein L, found in Nandina domestica (Heavenly bamboo).